The following is a 429-amino-acid chain: Glucose-1-phosphate adenylyltransferase (429 aa).

Alpha-D-glucose 1-phosphate contacts are provided by residues glycine 162, glutamate 177–lysine 178, and serine 209.

It belongs to the bacterial/plant glucose-1-phosphate adenylyltransferase family. Homotetramer.

It catalyses the reaction alpha-D-glucose 1-phosphate + ATP + H(+) = ADP-alpha-D-glucose + diphosphate. It participates in glycan biosynthesis; glycogen biosynthesis. Involved in the biosynthesis of ADP-glucose, a building block required for the elongation reactions to produce glycogen. Catalyzes the reaction between ATP and alpha-D-glucose 1-phosphate (G1P) to produce pyrophosphate and ADP-Glc. This is Glucose-1-phosphate adenylyltransferase from Trichormus variabilis (strain ATCC 29413 / PCC 7937) (Anabaena variabilis).